The chain runs to 181 residues: Cyclic AMP-dependent transcription factor ATF-3 (181 aa).

Positions 76-97 (VTKAEVAPEEDERKKRRRERNK) are disordered. Residue Lys78 forms a Glycyl lysine isopeptide (Lys-Gly) (interchain with G-Cter in SUMO2) linkage. Residues 86-149 (DERKKRRRER…QHLIYMLNLH (64 aa)) enclose the bZIP domain. A basic motif region spans residues 88–110 (RKKRRRERNKIAAAKCRNKKKEK). The tract at residues 114 to 142 (LQKESEKLESVNAELKAQIEELKNEKQHL) is leucine-zipper. The residue at position 162 (Thr162) is a Phosphothreonine. A Glycyl lysine isopeptide (Lys-Gly) (interchain with G-Cter in SUMO2) cross-link involves residue Lys175.

This sequence belongs to the bZIP family. ATF subfamily. In terms of assembly, binds DNA as a homodimer or a heterodimer. Interacts with KAT5; promoting KAT5 autoacetylation and KAT5 deubiquitination by USP7.

The protein localises to the nucleus. In terms of biological role, this protein binds the cAMP response element (CRE) (consensus: 5'-GTGACGT[AC][AG]-3'), a sequence present in many viral and cellular promoters. Represses transcription from promoters with ATF sites. It may repress transcription by stabilizing the binding of inhibitory cofactors at the promoter. In Bos taurus (Bovine), this protein is Cyclic AMP-dependent transcription factor ATF-3 (ATF3).